We begin with the raw amino-acid sequence, 467 residues long: ATP synthase subunit beta, chloroplastic (467 aa).

149-156 (GGAGVGKT) contacts ATP.

It belongs to the ATPase alpha/beta chains family. In terms of assembly, F-type ATPases have 2 components, CF(1) - the catalytic core - and CF(0) - the membrane proton channel. CF(1) has five subunits: alpha(3), beta(3), gamma(1), delta(1), epsilon(1). CF(0) has four main subunits: a(1), b(1), b'(1) and c(9-12).

Its subcellular location is the plastid. It is found in the chloroplast thylakoid membrane. The catalysed reaction is ATP + H2O + 4 H(+)(in) = ADP + phosphate + 5 H(+)(out). Its function is as follows. Produces ATP from ADP in the presence of a proton gradient across the membrane. The catalytic sites are hosted primarily by the beta subunits. This is ATP synthase subunit beta, chloroplastic from Cyanidioschyzon merolae (strain NIES-3377 / 10D) (Unicellular red alga).